The chain runs to 330 residues: GDP-mannose transporter (330 aa).

The Cytoplasmic segment spans residues 1-13; sequence MSQLKVDNGPLSH. A helical membrane pass occupies residues 14 to 34; sequence VANSGPISIGAYCFSSIMMTV. Residues 35–48 lie on the Lumenal side of the membrane; sequence TNKFVVNLKGFNMN. A helical transmembrane segment spans residues 49-69; the sequence is FVMLFVQAAVCVNLLFFLRLL. Residues 70–81 are Cytoplasmic-facing; the sequence is GYAKFRPLNRTD. Residues 82-98 form a helical membrane-spanning segment; that stretch reads AKNWFPITIFLVLMIYT. Over 99–104 the chain is Lumenal; it reads SSKSLQ. A helical transmembrane segment spans residues 105–124; it reads YLAVPIYTIFKNLTIILIAY. Topologically, residues 125 to 138 are cytoplasmic; the sequence is GEVLFFGGSVTAME. A helical membrane pass occupies residues 139 to 155; that stretch reads LSSFLLMVLSSVVATLG. The Lumenal segment spans residues 156–170; that stretch reads DQQALKKTADAGASL. The helical transmembrane segment at 171–191 threads the bilayer; sequence FNIGYMWMFINCLSSAAFVLV. The Cytoplasmic segment spans residues 192–203; the sequence is MRKRIKLTNFKD. The chain crosses the membrane as a helical span at residues 204-224; the sequence is FDTMFYNNILSMPVLLALSFL. The Lumenal segment spans residues 225-241; sequence MEDWSTENLTKNLSRDS. A helical transmembrane segment spans residues 242 to 262; the sequence is VTAMIISGMTAVCISYCSGWC. Residues 263–269 are Cytoplasmic-facing; the sequence is VRVTSST. The helical transmembrane segment at 270–290 threads the bilayer; it reads TYSMVGALNKLPIALSGLIFF. Residues 291–294 are Lumenal-facing; sequence DAPK. A helical transmembrane segment spans residues 295–315; that stretch reads NFLSIFSIFLGFLSGIVYAVA. The Cytoplasmic portion of the chain corresponds to 316–330; that stretch reads KQKKQQNPQPSAPIK.

Belongs to the TPT transporter family. SLC35D subfamily. In terms of assembly, homooligomer.

The protein localises to the golgi apparatus membrane. Its subcellular location is the cytoplasmic vesicle membrane. It is found in the endoplasmic reticulum membrane. In terms of biological role, involved in the import of GDP-mannose from the cytoplasm into the Golgi lumen. This chain is GDP-mannose transporter (VRG4), found in Kluyveromyces lactis (strain ATCC 8585 / CBS 2359 / DSM 70799 / NBRC 1267 / NRRL Y-1140 / WM37) (Yeast).